The chain runs to 649 residues: Extracellular metalloproteinase 4 (649 aa).

The N-terminal stretch at 1 to 18 (MHGLLLAGLLALPSNVLG) is a signal peptide. A propeptide spanning residues 19-260 (HPAEPPNSVN…VHGVVDYVAS (242 aa)) is cleaved from the precursor. His443 provides a ligand contact to Zn(2+). Residue Glu444 is part of the active site. His447 serves as a coordination point for Zn(2+). 2 N-linked (GlcNAc...) asparagine glycosylation sites follow: Asn494 and Asn609.

It belongs to the peptidase M36 family. The cofactor is Zn(2+).

The protein localises to the secreted. Secreted metalloproteinase probably acting as a virulence factor. This chain is Extracellular metalloproteinase 4 (MEP4), found in Arthroderma otae (strain ATCC MYA-4605 / CBS 113480) (Microsporum canis).